The following is a 462-amino-acid chain: UDP-N-acetylmuramoylalanine--D-glutamate ligase (462 aa).

Residue 117–123 (GTNGKTT) participates in ATP binding.

Belongs to the MurCDEF family.

It localises to the cytoplasm. It catalyses the reaction UDP-N-acetyl-alpha-D-muramoyl-L-alanine + D-glutamate + ATP = UDP-N-acetyl-alpha-D-muramoyl-L-alanyl-D-glutamate + ADP + phosphate + H(+). It functions in the pathway cell wall biogenesis; peptidoglycan biosynthesis. Functionally, cell wall formation. Catalyzes the addition of glutamate to the nucleotide precursor UDP-N-acetylmuramoyl-L-alanine (UMA). This is UDP-N-acetylmuramoylalanine--D-glutamate ligase from Synechococcus sp. (strain CC9902).